Consider the following 567-residue polypeptide: MHGRLKVKTSEEQAEAKRLEREQKLKLYQTATQTVFQKRQAGELDESVLELTSQILGANPDFATLWNCRREVLQRLEVQKSPEELAALVKAELGFLESCLRVNPKSYGTWHHRCWLLGRLPEPNWARELELCARFLEVDERNFHCWDYRRFVASQAAVPPAEELAFTDSLITRNFSNYSSWHYRSCLLPQLHPQPDSGPQGRLPEDVLLKELELVQNAFFTDPNDQSAWFYHRWLLGRADPQDALRCLHVSRDEACLTVSFSRPLLVGPSTETLLLMVNESPLSVEWRTPDGRNRPSHVWLCDLPAASLNDHLPQHTFRVIWTAGNAQKECVLLKGRQEGWCRDSATDEQLFRCELSVEKSTVLQSELESCKELQELEPENKWCLLTIILLMRALDPLLYEKETLQYFQTLKAVDPMRAAYLDDLRSKFLLENSVLKMEYADVRVLHLGHKDLTVLCHLEQLLLVTHLDLSHNRLRALPPALAALRCLEVLQANDNAIESLDGVTNLPRLQELSLCNNRLQQPAVLQPLASCPRLVLLNLQDNPLCQAVGISEHLAELLPSVSSILT.

PFTA repeat units follow at residues 44 to 78 (LDESVLELTSQILGANPDFATLWNCRREVLQRLEV), 88 to 122 (LVKAELGFLESCLRVNPKSYGTWHHRCWLLGRLPE), 124 to 158 (NWARELELCARFLEVDERNFHCWDYRRFVASQAAV), 159 to 193 (PPAEELAFTDSLITRNFSNYSSWHYRSCLLPQLHP), 207 to 241 (VLLKELELVQNAFFTDPNDQSAWFYHRWLLGRADP), and 363 to 397 (VLQSELESCKELQELEPENKWCLLTIILLMRALDP). S98 carries the phosphoserine modification. LRR repeat units lie at residues 442-463 (DVRVLHLGHKDLTVLCHLEQLL), 464-486 (LVTHLDLSHNRLRALPPALAALR), 487-508 (CLEVLQANDNAIESLDGVTNLP), 509-530 (RLQELSLCNNRLQQPAVLQPLA), and 534-555 (RLVLLNLQDNPLCQAVGISEHL).

The protein belongs to the protein prenyltransferase subunit alpha family. As to quaternary structure, heterotrimer composed of RABGGTA, RABGGTB and CHM; within this trimer, RABGGTA and RABGGTB form the catalytic component B, while CHM (component A) mediates peptide substrate binding. The Rab GGTase dimer (RGGT) interacts with CHM (component A) prior to Rab protein binding; the association is stabilized by geranylgeranyl pyrophosphate (GGpp). The CHM:RGGT:Rab complex is destabilized by GGpp. Interacts with non-phosphorylated form of RAB8A; phosphorylation of RAB8A disrupts this interaction.

The enzyme catalyses geranylgeranyl diphosphate + L-cysteinyl-[protein] = S-geranylgeranyl-L-cysteinyl-[protein] + diphosphate. Its activity is regulated as follows. The enzymatic reaction requires the aid of a Rab escort protein (also called component A), such as CHM. Its function is as follows. Catalyzes the transfer of a geranylgeranyl moiety from geranylgeranyl diphosphate to both cysteines of Rab proteins with the C-terminal sequence -XXCC, -XCXC and -CCXX, such as RAB1A, RAB3A, RAB5A and RAB7A. The polypeptide is Geranylgeranyl transferase type-2 subunit alpha (RABGGTA) (Sus scrofa (Pig)).